Reading from the N-terminus, the 68-residue chain is Large ribosomal subunit protein uL29 (68 aa).

The protein belongs to the universal ribosomal protein uL29 family.

The protein is Large ribosomal subunit protein uL29 of Rhodopseudomonas palustris (strain BisB18).